The following is a 144-amino-acid chain: Maximins 7/H13 (144 aa).

A signal peptide spans 1–18; it reads MNFKYIVAVSFLIASAYA. Residues 19–43 constitute a propeptide that is removed on maturation; that stretch reads RSEENDEQSLSQRDVLEEESLREIR. The residue at position 70 (asparagine 70) is an Asparagine amide. The propeptide occupies 74 to 123; that stretch reads TAEDHEVMKRLEAVMRDLDSLDYPEEAAERETRGFNQEEIANLFTKKEKR. Leucine 143 carries the post-translational modification Leucine amide.

It belongs to the bombinin family. Expressed by the skin glands.

The protein resides in the secreted. In terms of biological role, maximin-7 shows antimicrobial activity against bacteria and against the fungus C.albicans. It has little hemolytic activity. Maximin-H13 shows antimicrobial activity against bacteria and against the fungus C.albicans. Shows strong hemolytic activity. In Bombina maxima (Giant fire-bellied toad), this protein is Maximins 7/H13.